The sequence spans 637 residues: tRNA uridine 5-carboxymethylaminomethyl modification enzyme MnmG (637 aa).

An FAD-binding site is contributed by 14 to 19; it reads GAGHAG. 279 to 293 is a binding site for NAD(+); the sequence is GPRYCPSIEDKVVRF.

It belongs to the MnmG family. In terms of assembly, homodimer. Heterotetramer of two MnmE and two MnmG subunits. Requires FAD as cofactor.

The protein resides in the cytoplasm. Functionally, NAD-binding protein involved in the addition of a carboxymethylaminomethyl (cmnm) group at the wobble position (U34) of certain tRNAs, forming tRNA-cmnm(5)s(2)U34. This chain is tRNA uridine 5-carboxymethylaminomethyl modification enzyme MnmG, found in Desulfitobacterium hafniense (strain Y51).